The chain runs to 426 residues: Glutamate-1-semialdehyde 2,1-aminomutase (426 aa).

At lysine 265 the chain carries N6-(pyridoxal phosphate)lysine.

It belongs to the class-III pyridoxal-phosphate-dependent aminotransferase family. HemL subfamily. Homodimer. Requires pyridoxal 5'-phosphate as cofactor.

Its subcellular location is the cytoplasm. The enzyme catalyses (S)-4-amino-5-oxopentanoate = 5-aminolevulinate. The protein operates within porphyrin-containing compound metabolism; protoporphyrin-IX biosynthesis; 5-aminolevulinate from L-glutamyl-tRNA(Glu): step 2/2. This Escherichia coli O81 (strain ED1a) protein is Glutamate-1-semialdehyde 2,1-aminomutase.